The chain runs to 303 residues: NAD(+)--arginine ADP-ribosyltransferase Lart1 (303 aa).

Its subcellular location is the secreted. The catalysed reaction is L-arginyl-[protein] + NAD(+) = N(omega)-(ADP-D-ribosyl)-L-arginyl-[protein] + nicotinamide + H(+). Its function is as follows. ADP-ribosyltransferase that targets a specific class of NAD(+)-dependent glutamate dehydrogenase (GDH) enzymes found in fungi and protists, including many natural hosts of Legionella. Acts by targeting a conserved arginine residue in the NAD(+)-binding pocket of GDH, thereby blocking oxidative deamination of glutamate. Lart1 may target amoeba GDH to prevent a conserved stress response. In vitro, acts on Glud2 from the amoeba Dictyostelium discoideum (DdGluD2) and yeast Gdh2p but does not act on human or Legionella GDH homologs. The protein is NAD(+)--arginine ADP-ribosyltransferase Lart1 of Legionella pneumophila subsp. pneumophila (strain Philadelphia 1 / ATCC 33152 / DSM 7513).